Consider the following 186-residue polypeptide: Peptidyl-tRNA hydrolase (186 aa).

Tyrosine 14 is a binding site for tRNA. The active-site Proton acceptor is histidine 19. The tRNA site is built by tyrosine 61, asparagine 63, and asparagine 107.

The protein belongs to the PTH family. As to quaternary structure, monomer.

It is found in the cytoplasm. It carries out the reaction an N-acyl-L-alpha-aminoacyl-tRNA + H2O = an N-acyl-L-amino acid + a tRNA + H(+). Its function is as follows. Hydrolyzes ribosome-free peptidyl-tRNAs (with 1 or more amino acids incorporated), which drop off the ribosome during protein synthesis, or as a result of ribosome stalling. Functionally, catalyzes the release of premature peptidyl moieties from peptidyl-tRNA molecules trapped in stalled 50S ribosomal subunits, and thus maintains levels of free tRNAs and 50S ribosomes. In Helicobacter acinonychis (strain Sheeba), this protein is Peptidyl-tRNA hydrolase.